We begin with the raw amino-acid sequence, 430 residues long: MTRSEALFEQAKKTIPGGVNSPVRAFNGVGGSPLFIEKADGAYIYDADGKAYIDYVGSWGPMILGHNHPKIREAVLAAVHNGLSFGAPTELEVQMAEKVIAMVPSIEQVRMVSSGTEATMSAIRLARGFTNRDKILKFEGCYHGHADCLLVKAGSGALTLGQPSSPGIPEDFAKHTLTAVYNDLDSVRSLFEQYPTEISCIIIEPVAGNMNCIPPIPGFLEGLRAMCDEFGALLIIDEVMTGFRVSRSGAQGHYGVTPDLTTLGKVIGGGMPVGAFGGRKEVMQFIAPTGPVYQAGTLSGNPIAMSAGLAQMEALCEEGLYEALSAKTKRIAEGFKAAADKHGIPMAINYVGGMFGFFFTEQEQITRFDQVTKCNIEHFRTFYHGMLDEGVYLAPSAYEAGFLSMAHGEEELRLTLEAADRVLGRMKAAM.

The residue at position 265 (Lys265) is an N6-(pyridoxal phosphate)lysine.

This sequence belongs to the class-III pyridoxal-phosphate-dependent aminotransferase family. HemL subfamily. As to quaternary structure, homodimer. Pyridoxal 5'-phosphate serves as cofactor.

The protein resides in the cytoplasm. The enzyme catalyses (S)-4-amino-5-oxopentanoate = 5-aminolevulinate. Its pathway is porphyrin-containing compound metabolism; protoporphyrin-IX biosynthesis; 5-aminolevulinate from L-glutamyl-tRNA(Glu): step 2/2. The chain is Glutamate-1-semialdehyde 2,1-aminomutase from Shewanella sp. (strain ANA-3).